Consider the following 138-residue polypeptide: Small ribosomal subunit protein bS6 (138 aa).

The interval 94 to 138 (VKQDGPLPTPKPTSKENEPEKEEVKPTEEKTESPSKDEKKEDSKE) is disordered. Positions 106–138 (TSKENEPEKEEVKPTEEKTESPSKDEKKEDSKE) are enriched in basic and acidic residues.

Belongs to the bacterial ribosomal protein bS6 family.

Binds together with bS18 to 16S ribosomal RNA. This chain is Small ribosomal subunit protein bS6, found in Prochlorococcus marinus (strain NATL2A).